A 186-amino-acid polypeptide reads, in one-letter code: ADP-ribosylation factor-like protein 8B (186 aa).

N-acetylmethionine is present on Met-1. Positions 1-19 (MLALISRLLDWFRSLFWKE) form an intramembrane region, note=Mediates targeting to membranes. Residues 29–35 (QYSGKTT), 71–75 (DIGGQ), and 130–133 (NKRD) contribute to the GTP site. Lys-141 participates in a covalent cross-link: Glycyl lysine isopeptide (Lys-Gly) (interchain with G-Cter in ubiquitin).

This sequence belongs to the small GTPase superfamily. Arf family. As to quaternary structure, interacts with tubulin. Interacts with BORCS5; recruits ARL8B to lysosomes. Interacts with VPS41; the interaction mediates the recruitment of the HOPS complex to lysosomes. Interacts (GTP-bound form) with PLEKHM2 (via RUN domain); the interaction is required to recruit the motor protein kinesin-1 on lysosomes. Interacts (GTP-bound form) with PLEKHM1 (via RUN domain); the interaction is required for PLEKHM1 localization to lysosomes and for ARL8B function in delivery and degradation of endocytic and autophagic cargo in lysosomes. PLEKHM1 and PLEKHM2 compete for interaction with ARL8B. Interacts (GTP-bound form) with RUFY1; the interaction is required for RUFY1 endosomal location. When GTP-bound, interacts with RUFY3 and RUFY4, but not with RUFY1, nor RUFY2. Ubiquitinated at Lys-141 by RNF167, leading to its degradation. As to expression, ubiquitously expressed.

It is found in the late endosome membrane. The protein resides in the lysosome membrane. The protein localises to the cytoplasm. Its subcellular location is the cytoskeleton. It localises to the spindle. It is found in the cell projection. The protein resides in the axon. The protein localises to the synapse. Its subcellular location is the cytolytic granule membrane. It localises to the early endosome membrane. It carries out the reaction GTP + H2O = GDP + phosphate + H(+). Functionally, small GTPase which cycles between active GTP-bound and inactive GDP-bound states. In its active state, binds to a variety of effector proteins playing a key role in the regulation of lysosomal positioning which is important for nutrient sensing, natural killer cell-mediated cytotoxicity and antigen presentation. Along with its effectors, orchestrates lysosomal transport and fusion. Localizes specifically to lysosomal membranes and mediates anterograde lysosomal motility by recruiting PLEKHM2, which in turn recruits the motor protein kinesin-1 on lysosomes. Required for lysosomal and cytolytic granule exocytosis. Critical factor involved in NK cell-mediated cytotoxicity. Drives the polarization of cytolytic granules and microtubule-organizing centers (MTOCs) toward the immune synapse between effector NK lymphocytes and target cells. In neurons, mediates the anterograde axonal long-range transport of presynaptic lysosome-related vesicles required for presynaptic biogenesis and synaptic function. Also acts as a regulator of endosome to lysosome trafficking pathways of special significance for host defense. Recruits RUFY1 onto early endosomes regulating endosomes to trans-Golgi network proteins retrieval. Regulates cargo trafficking to lysosomes by binding to PLEKHM1 and recruiting the HOPS subunit VPS41, resulting in functional assembly of the HOPS complex on lysosomal membranes. Plays an important role in cargo delivery to lysosomes for antigen presentation and microbial killing. Directs the intersection of CD1d with lipid antigens in lysosomes, and plays a role in intersecting phagosomes with lysosomes to generate phagolysosomes that kill microbes. Involved in the process of MHC II presentation. Regulates the delivery of antigens to lysosomes and the formation of MHC II-peptide complexes through the recruitment of the HOPS complex to lysosomes allowing the fusion of late endosomes to lysosomes. May play a role in chromosome segregation. In terms of biological role, (Microbial infection) During Mycobacterium tuberculosis (Mtb) infection, is required for plasma membrane repair by controlling the exocytosis of lysosomes in macrophages. ARL8B secretion pathway is crucial to control the type of cell death of the M.tuberculosis-infected macrophages, distinguishing avirulent from virulent Mtb induced necrotic cell death. Its function is as follows. (Microbial infection) During infection, coronaviruses such as SARS-CoV-2 and the chaperone HSPA5/GRP78 are probably co-released through ARL8B-dependent lysosomal exocytic pathway for unconventional egress. This is ADP-ribosylation factor-like protein 8B from Homo sapiens (Human).